The following is a 1299-amino-acid chain: DNA-directed RNA polymerase subunit beta' (1299 aa).

The Zn(2+) site is built by cysteine 60, cysteine 62, cysteine 75, and cysteine 78. Residues 385 to 405 (GRRGRPVTGPGNRPLKSLSDM) are disordered. Mg(2+) is bound by residues aspartate 535, aspartate 537, and aspartate 539. Zn(2+)-binding residues include cysteine 886, cysteine 962, cysteine 969, and cysteine 972.

The protein belongs to the RNA polymerase beta' chain family. In terms of assembly, the RNAP catalytic core consists of 2 alpha, 1 beta, 1 beta' and 1 omega subunit. When a sigma factor is associated with the core the holoenzyme is formed, which can initiate transcription. Mg(2+) is required as a cofactor. Zn(2+) serves as cofactor.

It carries out the reaction RNA(n) + a ribonucleoside 5'-triphosphate = RNA(n+1) + diphosphate. Functionally, DNA-dependent RNA polymerase catalyzes the transcription of DNA into RNA using the four ribonucleoside triphosphates as substrates. The chain is DNA-directed RNA polymerase subunit beta' from Streptomyces avermitilis (strain ATCC 31267 / DSM 46492 / JCM 5070 / NBRC 14893 / NCIMB 12804 / NRRL 8165 / MA-4680).